Reading from the N-terminus, the 99-residue chain is ATP-dependent Clp protease adapter protein ClpS (99 aa).

The protein belongs to the ClpS family. As to quaternary structure, binds to the N-terminal domain of the chaperone ClpA.

Its function is as follows. Involved in the modulation of the specificity of the ClpAP-mediated ATP-dependent protein degradation. The protein is ATP-dependent Clp protease adapter protein ClpS of Acetivibrio thermocellus (strain ATCC 27405 / DSM 1237 / JCM 9322 / NBRC 103400 / NCIMB 10682 / NRRL B-4536 / VPI 7372) (Clostridium thermocellum).